A 465-amino-acid polypeptide reads, in one-letter code: MGDSDNAIPFSRKRTALKELSRDNPGLDDDDEDTSALESGTFNTASKEVLASRRIIRVRRTDRSATAPPASNPFTGIRLVPFTAPAPSTAAAETTKPLSAGKQETLADGRSDATKETDGDSKEKSDAIDAVGKQETQGDEISAKTKDIIDGGEKEMSEAVNSVEGGGAVNKNEDEIKTTMVTEVAAGEETVKDDNNNSNTVEGSDCVVKDTGGNQTEKEGKEGDGNEDTEKNGDSGALSSFHQHSSSKNAFTGLASTGFSASSFSFGLVPQEGSTGSGSEQSSFSFGQANNGNSSLFGASVATSITTKSTETTTAFPSKQDVSVETGEENEKAAFTADSVMFEYLEGGWKERGKGELKVNISTTENRKARLVMRSKGNYRLTLNASLYPEMKLAKMDKKGITFACVNSVSDAKDGLSTLALKFKDPTVVEEFRAVIEEHKDSKPSVAEAAAPLKTPENSPSAEDA.

Disordered stretches follow at residues 1-44 (MGDS…TFNT) and 59-244 (RRTD…FHQH). The residue at position 2 (G2) is an N-acetylglycine. Residues 26 to 35 (GLDDDDEDTS) show a composition bias toward acidic residues. Residues 81 to 97 (PFTAPAPSTAAAETTKP) are compositionally biased toward low complexity. 3 stretches are compositionally biased toward basic and acidic residues: residues 105-127 (TLAD…KSDA), 141-157 (ISAK…KEMS), and 216-233 (TEKE…EKNG). S125 carries the post-translational modification Phosphoserine. A run of 3 repeats spans residues 266-267 (FG), 286-287 (FG), and 297-298 (FG). The tract at residues 266–298 (FGLVPQEGSTGSGSEQSSFSFGQANNGNSSLFG) is 3 X 2 AA repeats of F-G. 2 disordered regions span residues 308 to 330 (KSTE…GEEN) and 439 to 465 (HKDS…AEDA). T455 bears the Phosphothreonine mark. Over residues 456-465 (PENSPSAEDA) the composition is skewed to polar residues. S459 is modified (phosphoserine).

Part of the nuclear pore complex (NPC). The NPC has an eight-fold symmetrical structure comprising a central transport channel and two rings, the cytoplasmic and nuclear rings, to which eight filaments are attached. The cytoplasmic filaments have loose ends, while the nuclear filaments are joined in a distal ring, forming a nuclear basket. NPCs are highly dynamic in configuration and composition, and can be devided in 3 subcomplexes, the NUP62 subcomplex, the NUP107-160 subcomplex and the NUP93 subcomplex, containing approximately 30 different nucleoporin proteins.

The protein resides in the nucleus. It is found in the nucleoplasm. Its subcellular location is the nuclear pore complex. In terms of biological role, probably involved in nucleocytoplasmic transport via its interactions with importins and Ran, rather than by forming part of the nuclear pore complex (NPC) scaffolding. This is Nuclear pore complex protein NUP50B from Arabidopsis thaliana (Mouse-ear cress).